We begin with the raw amino-acid sequence, 690 residues long: Xylosyl- and glucuronyltransferase LARGE2 (690 aa).

The Cytoplasmic segment spans residues 1 to 7 (MLPRGRP). A helical; Signal-anchor for type II membrane protein membrane pass occupies residues 8–28 (RALGAALLLLLLLVVGFFLFG). The Lumenal portion of the chain corresponds to 29–690 (RDPEYGLGTT…TALQQSRSRA (662 aa)). Residues Asn50 and Asn77 are each glycosylated (N-linked (GlcNAc...) asparagine). The xylosyltransferase activity stretch occupies residues 67–342 (LHVAIVCAGY…FLGFDGKLLC (276 aa)). Residues Asp171 and Asp173 each coordinate Mn(2+). Asn201 carries N-linked (GlcNAc...) asparagine glycosylation. Residues 343-686 (RELFGCPNQF…LKYLTALQQS (344 aa)) form a glucuronyltransferase activity region. Mn(2+) is bound by residues Asp491 and Asp493.

The protein in the C-terminal section; belongs to the glycosyltransferase 49 family. It in the N-terminal section; belongs to the glycosyltransferase 8 family. In terms of assembly, interacts with B4GAT1. It depends on Mn(2+) as a cofactor.

It is found in the golgi apparatus membrane. The enzyme catalyses 3-O-[beta-D-GlcA-(1-&gt;3)-beta-D-Xyl-(1-&gt;4)-Rib-ol-P-Rib-ol-P-3-beta-D-GalNAc-(1-&gt;3)-beta-D-GlcNAc-(1-&gt;4)-(O-6-P-alpha-D-Man)]-Thr-[protein] + UDP-alpha-D-xylose = 3-O-[alpha-D-Xyl-(1-&gt;3)-beta-D-GlcA-(1-&gt;4)-beta-D-Xyl-(1-&gt;4)-Rib-ol-P-Rib-ol-P-3-beta-D-GalNAc-(1-&gt;3)-beta-D-GlcNAc-(1-&gt;4)-(O-6-P-alpha-D-Man)]-Thr-[protein] + UDP + H(+). It carries out the reaction 3-O-{(1-&gt;[3)-alpha-D-Xyl-(1-&gt;3)-beta-D-GlcA-(1-&gt;](n)-4)-beta-D-Xyl-(1-&gt;4)-Rib-ol-P-Rib-ol-P-3-beta-D-GalNAc-(1-&gt;3)-beta-D-GlcNAc-(1-&gt;4)-O-6-P-alpha-D-Man}-L-Thr-[protein] + UDP-alpha-D-glucuronate = 3-O-{beta-D-GlcA-(1-&gt;[3)-alpha-D-Xyl-(1-&gt;3)-beta-D-GlcA-(1-&gt;](n)-4)-beta-D-Xyl-(1-&gt;4)-Rib-ol-P-Rib-ol-P-3-beta-D-GalNAc-(1-&gt;3)-beta-D-GlcNAc-(1-&gt;4)-O-6-P-alpha-D-Man}-L-Thr-[protein] + UDP + H(+). It catalyses the reaction 3-O-{beta-D-GlcA-(1-&gt;[3)-alpha-D-Xyl-(1-&gt;3)-beta-D-GlcA-(1-&gt;](n)-4)-beta-D-Xyl-(1-&gt;4)-Rib-ol-P-Rib-ol-P-3-beta-D-GalNAc-(1-&gt;3)-beta-D-GlcNAc-(1-&gt;4)-O-6-P-alpha-D-Man}-L-Thr-[protein] + UDP-alpha-D-xylose = 3-O-{(1-&gt;[3)-alpha-D-Xyl-(1-&gt;3)-beta-D-GlcA-(1-&gt;](n+1)-4)-beta-D-Xyl-(1-&gt;4)-Rib-ol-P-Rib-ol-P-3-beta-D-GalNAc-(1-&gt;3)-beta-D-GlcNAc-(1-&gt;4)-O-6-P-alpha-D-Man}-L-Thr-[protein] + UDP + H(+). It participates in protein modification; protein glycosylation. In terms of biological role, bifunctional glycosyltransferase with both alpha-1,3-xylosyltransferase and beta-1,3-glucuronyltransferase activities involved in the maturation of alpha-dystroglycan (DAG1) by glycosylation leading to DAG1 binding to laminin G-like domain-containing extracellular proteins with high affinity and in a phosphorylated-O-mannosyl trisaccharide dependent manner. Elongates the glucuronyl-beta-1,4-xylose-beta disaccharide primer structure by adding repeating units [-3-Xylose-alpha-1,3-GlcA-beta-1-] to produce a heteropolysaccharide. Supports the maturation of DAG1 more effectively than LARGE1. In addition, can modify both heparan sulfate (HS)- and chondroitin/dermatan sulfate (CS/DS)-proteoglycans (PGs), namely GPC4, with a glycosaminoglycan (GAG)-like polysaccharide composed of xylose and glucuronic acid to confer laminin binding. The protein is Xylosyl- and glucuronyltransferase LARGE2 of Rattus norvegicus (Rat).